A 455-amino-acid polypeptide reads, in one-letter code: Phosphoglucosamine mutase (455 aa).

S103 (phosphoserine intermediate) is an active-site residue. 4 residues coordinate Mg(2+): S103, D243, D245, and D247. Residue S103 is modified to Phosphoserine.

This sequence belongs to the phosphohexose mutase family. The cofactor is Mg(2+). In terms of processing, activated by phosphorylation.

It carries out the reaction alpha-D-glucosamine 1-phosphate = D-glucosamine 6-phosphate. In terms of biological role, catalyzes the conversion of glucosamine-6-phosphate to glucosamine-1-phosphate. This chain is Phosphoglucosamine mutase, found in Halorhodospira halophila (strain DSM 244 / SL1) (Ectothiorhodospira halophila (strain DSM 244 / SL1)).